The chain runs to 157 residues: 6,7-dimethyl-8-ribityllumazine synthase 1 (157 aa).

5-amino-6-(D-ribitylamino)uracil contacts are provided by residues F22, 53–55, and 82–84; these read ALE and TVI. 87–88 serves as a coordination point for (2S)-2-hydroxy-3-oxobutyl phosphate; sequence ET. Catalysis depends on H90, which acts as the Proton donor. N115 contributes to the 5-amino-6-(D-ribitylamino)uracil binding site. R129 contacts (2S)-2-hydroxy-3-oxobutyl phosphate.

The protein belongs to the DMRL synthase family. As to quaternary structure, homopentamer.

It carries out the reaction (2S)-2-hydroxy-3-oxobutyl phosphate + 5-amino-6-(D-ribitylamino)uracil = 6,7-dimethyl-8-(1-D-ribityl)lumazine + phosphate + 2 H2O + H(+). Its pathway is cofactor biosynthesis; riboflavin biosynthesis; riboflavin from 2-hydroxy-3-oxobutyl phosphate and 5-amino-6-(D-ribitylamino)uracil: step 1/2. Its function is as follows. Catalyzes the formation of 6,7-dimethyl-8-ribityllumazine by condensation of 5-amino-6-(D-ribitylamino)uracil with 3,4-dihydroxy-2-butanone 4-phosphate. This is the penultimate step in the biosynthesis of riboflavin. This is 6,7-dimethyl-8-ribityllumazine synthase 1 (ribH1) from Brucella melitensis biotype 1 (strain ATCC 23456 / CCUG 17765 / NCTC 10094 / 16M).